Reading from the N-terminus, the 217-residue chain is UPF0502 protein ETA_20480 (217 aa).

The disordered stretch occupies residues 169 to 188; sequence GEVDESSRADGHHPDDHRGD. Over residues 173 to 188 the composition is skewed to basic and acidic residues; the sequence is ESSRADGHHPDDHRGD.

The protein belongs to the UPF0502 family.

This Erwinia tasmaniensis (strain DSM 17950 / CFBP 7177 / CIP 109463 / NCPPB 4357 / Et1/99) protein is UPF0502 protein ETA_20480.